Reading from the N-terminus, the 448-residue chain is Phosphoglucosamine mutase (448 aa).

The active-site Phosphoserine intermediate is S100. S100, D240, D242, and D244 together coordinate Mg(2+). S100 is subject to Phosphoserine.

The protein belongs to the phosphohexose mutase family. Requires Mg(2+) as cofactor. In terms of processing, activated by phosphorylation.

The enzyme catalyses alpha-D-glucosamine 1-phosphate = D-glucosamine 6-phosphate. In terms of biological role, catalyzes the conversion of glucosamine-6-phosphate to glucosamine-1-phosphate. The chain is Phosphoglucosamine mutase from Clostridium perfringens (strain ATCC 13124 / DSM 756 / JCM 1290 / NCIMB 6125 / NCTC 8237 / Type A).